Consider the following 530-residue polypeptide: UDP-glucuronosyltransferase 2B17 (530 aa).

The signal sequence occupies residues 1 to 23 (MPGKWISALLLLQISCCFQSGNC). The helical transmembrane segment at 494–510 (VIGFLLTCSAVIAVLTV) threads the bilayer.

Belongs to the UDP-glycosyltransferase family.

The protein resides in the endoplasmic reticulum membrane. The catalysed reaction is glucuronate acceptor + UDP-alpha-D-glucuronate = acceptor beta-D-glucuronoside + UDP + H(+). It catalyses the reaction 17alpha-estradiol + UDP-alpha-D-glucuronate = 17alpha-estradiol 3-O-(beta-D-glucuronate) + UDP + H(+). The enzyme catalyses 17alpha-estradiol + UDP-alpha-D-glucuronate = 17alpha-estradiol 17-O-(beta-D-glucuronate) + UDP + H(+). It carries out the reaction 17beta-estradiol + UDP-alpha-D-glucuronate = 17beta-estradiol 17-O-(beta-D-glucuronate) + UDP + H(+). The catalysed reaction is 17beta-hydroxy-5alpha-androstan-3-one + UDP-alpha-D-glucuronate = 5alpha-dihydrotestosterone 17-O-(beta-D-glucuronate) + UDP + H(+). It catalyses the reaction testosterone + UDP-alpha-D-glucuronate = testosterone 17-O-(beta-D-glucuronate) + UDP + H(+). In terms of biological role, UDP-glucuronosyltransferase (UGT) that catalyzes phase II biotransformation reactions in which lipophilic substrates are conjugated with glucuronic acid to increase the metabolite's water solubility, thereby facilitating excretion into either the urine or bile. Catalyzes the glucuronidation of endogenous steroid hormones such as androgens (epitestosterone, androsterone) and estrogens (estradiol, epiestradiol). The sequence is that of UDP-glucuronosyltransferase 2B17 from Rattus norvegicus (Rat).